The following is a 284-amino-acid chain: F-box only protein 6 (284 aa).

The F-box domain occupies methionine 1 to lysine 48. The 182-residue stretch at phenylalanine 69–histidine 250 folds into the FBA domain. Phosphoserine is present on residues serine 249, serine 268, serine 275, serine 278, and serine 283.

As to quaternary structure, part of a SCF (SKP1-cullin-F-box) protein ligase complex. Interacts with VCP, CHEK1 and CUL1.

Its subcellular location is the cytoplasm. It participates in protein modification; protein ubiquitination. Its function is as follows. Substrate-recognition component of some SCF (SKP1-CUL1-F-box protein)-type E3 ubiquitin ligase complexes. Involved in endoplasmic reticulum-associated degradation pathway (ERAD) for misfolded lumenal proteins by recognizing and binding sugar chains on unfolded glycoproteins that are retrotranslocated into the cytosol and promoting their ubiquitination and subsequent degradation. Able to recognize and bind denatured glycoproteins, which are modified with not only high-mannose but also complex-type oligosaccharides. Also recognizes sulfated glycans. Also involved in DNA damage response by specifically recognizing activated CHEK1 (phosphorylated on 'Ser-345'), promoting its ubiquitination and degradation. Ubiquitination of CHEK1 is required to ensure that activated CHEK1 does not accumulate as cells progress through S phase, or when replication forks encounter transient impediments during normal DNA replication. The chain is F-box only protein 6 (Fbxo6) from Rattus norvegicus (Rat).